Consider the following 641-residue polypeptide: MSKIIGIDLGTTNSCVAIMDGDKVKVIENAEGDRTTPSIIAYTDDNETLVGQSAKRQAVTNPHNTLYAIKRLIGRRFEDDVVQKDIKMVPYKIAKADNGDAWVEVKGQKMAPPQVSAEVLKKMKKTAEDYLGEKVTEAVITVPAYFNDSQRQATKDAGKIAGLEVKRIINEPTAAALAYGLDKKSGDRTVAVYDLGGGTFDLSIIEIADVDGEHQFEVLATNGDTFLGGEDFDLKVIEYLADQFKKDSGIDLRGDSLAMQRLKEAAEKAKIELSSSQQTDVNLPYITADASGPKHMNVKLTRAKLESLVEDLVQRSLEPCKVALQDAGMKAGEIDEVILVGGQTRMPLVQEKVKEFFGKEPRKDVNPDEAVAMGAAIQGAVLSGDVKDVLLLDVTPLTLGIETMGGVATPLIEKNTTIPTKKSQIFSTADDNQTAVTIHVVQGERKQAAQNKSLGRFDLADIPPAPRGVPQIEVTFDIDANGILNVSAKDKATGKEQSIVIKASSGLNDDEIEKMVRDAEANAEEDRKFEELVQARNQGDAMVHAVRKTLSEAGDKVSDSEKESIEAAIKDLEEALEGSDKEAIEAKTQKLTEVSSELAQKMYADQADQAQQAGGQEEGQAKSADDAVDAEFEEVKDDDKK.

A Phosphothreonine; by autocatalysis modification is found at threonine 199. A disordered region spans residues 602–641 (MYADQADQAQQAGGQEEGQAKSADDAVDAEFEEVKDDDKK). Low complexity predominate over residues 604–615 (ADQADQAQQAGG). Positions 626 to 641 (DAVDAEFEEVKDDDKK) are enriched in acidic residues.

The protein belongs to the heat shock protein 70 family.

Acts as a chaperone. In Marinobacter nauticus (strain ATCC 700491 / DSM 11845 / VT8) (Marinobacter aquaeolei), this protein is Chaperone protein DnaK.